The following is a 239-amino-acid chain: Host range factor p28 (239 aa).

Residues Tyr-21–Trp-131 enclose the KilA-N domain. The RING-type zinc-finger motif lies at Cys-170 to Arg-223.

Belongs to the orthopoxvirus OPG021 family.

It localises to the host cytoplasm. In terms of biological role, RING-finger E3 ubiquitin ligase which catalyzes the formation of both 'Lys-48'- and 'Lys-63'-linked polyubiquitin chains. Plays an important role in virulence by acting as an anti-apoptotic factor. In Homo sapiens (Human), this protein is Host range factor p28 (OPG021).